We begin with the raw amino-acid sequence, 178 residues long: Small ribosomal subunit protein uS4 (178 aa).

Residues 104 to 166 enclose the S4 RNA-binding domain; the sequence is RRLQTMVYKK…PNSPMASENH (63 aa). A disordered region spans residues 157-178; the sequence is PNSPMASENHPERTAAVSEENQ.

It belongs to the universal ribosomal protein uS4 family. As to quaternary structure, part of the 30S ribosomal subunit. Contacts protein S5. The interaction surface between S4 and S5 is involved in control of translational fidelity.

One of the primary rRNA binding proteins, it binds directly to 16S rRNA where it nucleates assembly of the body of the 30S subunit. Its function is as follows. With S5 and S12 plays an important role in translational accuracy. The polypeptide is Small ribosomal subunit protein uS4 (Methanococcus maripaludis (strain C7 / ATCC BAA-1331)).